The following is a 700-amino-acid chain: Mitogen-activated protein kinase 9 (700 aa).

In terms of domain architecture, Protein kinase spans Tyr-107–Phe-398. Residues Ile-113–Val-121 and Lys-136 contribute to the ATP site. Asp-233 (proton acceptor) is an active-site residue. A Phosphothreonine modification is found at Thr-269. Residues Thr-269–Tyr-271 carry the TXY motif. A Phosphotyrosine modification is found at Tyr-271. Residues Glu-475–Asp-523 are disordered.

This sequence belongs to the protein kinase superfamily. CMGC Ser/Thr protein kinase family. MAP kinase subfamily. Dually phosphorylated on Thr-269 and Tyr-271, which activates the enzyme.

The enzyme catalyses L-seryl-[protein] + ATP = O-phospho-L-seryl-[protein] + ADP + H(+). It catalyses the reaction L-threonyl-[protein] + ATP = O-phospho-L-threonyl-[protein] + ADP + H(+). Its activity is regulated as follows. Activated by threonine and tyrosine phosphorylation. The protein is Mitogen-activated protein kinase 9 (MPK9) of Oryza sativa subsp. japonica (Rice).